Consider the following 446-residue polypeptide: ATP-dependent protease ATPase subunit HslU (446 aa).

Residues valine 18, 60-65 (GVGKTE), aspartate 259, glutamate 324, and arginine 396 each bind ATP.

This sequence belongs to the ClpX chaperone family. HslU subfamily. In terms of assembly, a double ring-shaped homohexamer of HslV is capped on each side by a ring-shaped HslU homohexamer. The assembly of the HslU/HslV complex is dependent on binding of ATP.

Its subcellular location is the cytoplasm. ATPase subunit of a proteasome-like degradation complex; this subunit has chaperone activity. The binding of ATP and its subsequent hydrolysis by HslU are essential for unfolding of protein substrates subsequently hydrolyzed by HslV. HslU recognizes the N-terminal part of its protein substrates and unfolds these before they are guided to HslV for hydrolysis. The chain is ATP-dependent protease ATPase subunit HslU from Acidovorax ebreus (strain TPSY) (Diaphorobacter sp. (strain TPSY)).